Consider the following 846-residue polypeptide: Patched domain-containing protein 4 (846 aa).

The next 10 helical transmembrane spans lie at 41 to 61 (HPVFFLTVPAVLTITFGLSAL), 230 to 250 (SILARSKVLVSLVLILTTATL), 265 to 285 (GLLGVLTVCISIITAAGIFFI), 293 to 313 (TLLGIPFFAMGHGTKGVFELL), 336 to 356 (VMVTYTMTSSLYFITFGMGAS), 373 to 393 (VSILLNYFYIFSFFGSCLVFA), 465 to 485 (PFVVILYLIYASFSFMGCLQI), 660 to 680 (PVLIAGFGVLLVLILTFFLVI), 686 to 706 (FWLILSVTSIELGVLGLMTLW), and 718 to 738 (LIYTLNFAIDHCAPLLFTFVL). An SSD domain is found at 233 to 392 (ARSKVLVSLV…FSFFGSCLVF (160 aa)). An N-linked (GlcNAc...) asparagine glycan is attached at asparagine 762. The next 2 helical transmembrane spans lie at 765 to 785 (SFLIGLVPLLFVPSNLTFTLF) and 787 to 807 (CLLLTGGCTLLHCFVILPVFL).

Belongs to the patched family.

It localises to the membrane. Its function is as follows. Could act as a repressor of canonical hedgehog signaling by antagonizing the effects of SMO, as suggested by down-regulation of hedgehog target genes, including GLI1, PTCH1, and PTCH2 in PTCHD4-expressing cells. This is Patched domain-containing protein 4 (PTCHD4) from Homo sapiens (Human).